Here is a 623-residue protein sequence, read N- to C-terminus: Aspartate--tRNA(Asp/Asn) ligase (623 aa).

Position 175 (glutamate 175) interacts with L-aspartate. An aspartate region spans residues 199–202 (QQYK). Positions 221 and 483 each coordinate L-aspartate. Residue 221 to 223 (RDE) coordinates ATP. Glutamate 517 contributes to the ATP binding site. Position 524 (arginine 524) interacts with L-aspartate. Position 569–572 (569–572 (GVDR)) interacts with ATP.

The protein belongs to the class-II aminoacyl-tRNA synthetase family. Type 1 subfamily. Homodimer.

Its subcellular location is the cytoplasm. The catalysed reaction is tRNA(Asx) + L-aspartate + ATP = L-aspartyl-tRNA(Asx) + AMP + diphosphate. Aspartyl-tRNA synthetase with relaxed tRNA specificity since it is able to aspartylate not only its cognate tRNA(Asp) but also tRNA(Asn). Reaction proceeds in two steps: L-aspartate is first activated by ATP to form Asp-AMP and then transferred to the acceptor end of tRNA(Asp/Asn). In Xanthobacter autotrophicus (strain ATCC BAA-1158 / Py2), this protein is Aspartate--tRNA(Asp/Asn) ligase.